Reading from the N-terminus, the 297-residue chain is TATA-box-binding protein (297 aa).

The disordered stretch occupies residues 52 to 116; that stretch reads EEQQRQQQQA…ITPATPASES (65 aa). Low complexity-rich tracts occupy residues 56–78 and 104–114; these read RQQQQAQQSTSQQGNQGSGQTPQ and MTPITPATPAS. 2 tandem repeats follow at residues 123 to 199 and 213 to 290.

Belongs to the TBP family. As to quaternary structure, belongs to the TFIID complex together with the TBP-associated factors (TAFs). Binds DNA as monomer. The N-terminal domain is extensively phosphorylated.

The protein localises to the nucleus. General transcription factor that functions at the core of the DNA-binding multiprotein factor TFIID. Binding of TFIID to the TATA box is the initial transcriptional step of the pre-initiation complex (PIC), playing a role in the activation of eukaryotic genes transcribed by RNA polymerase II. Members of the TBP family are differentially required to regulate transcription and development during early embryogenesis. Binds to the promoters of select genes. The sequence is that of TATA-box-binding protein from Xenopus tropicalis (Western clawed frog).